An 857-amino-acid chain; its full sequence is Potassium channel AKT1 (857 aa).

The Cytoplasmic segment spans residues 1 to 61 (MRGGALLCGQ…PYDHKYRIWE (61 aa)). A helical membrane pass occupies residues 62–82 (AFLVVLVVYTAWVSPFEFGFL). Topologically, residues 83–90 (RKPRPPLS) are extracellular. A helical membrane pass occupies residues 91-111 (ITDNIVNAFFAIDIIMTFFVG). The Cytoplasmic portion of the chain corresponds to 112–134 (YLDKSTYLIVDDRKQIAFKYLRS). The helical transmembrane segment at 135-155 (WFLLDLVSTIPSEAAMRISSQ) threads the bilayer. The Extracellular portion of the chain corresponds to 156 to 158 (SYG). A helical; Voltage-sensor transmembrane segment spans residues 159–179 (LFNMLRLWRLRRVGALFARLE). The Cytoplasmic segment spans residues 180–193 (KDRNFNYFWVRCAK). Residues 194–214 (LVCVTLFAVHCAACFYYLIAA) form a helical membrane-spanning segment. Over 215–241 (RNSNPAKTWIGANVANFLEESLWMRYV) the chain is Extracellular. Residues 242–261 (TSMYWSITTLTTVGYGDLHP) constitute an intramembrane region (pore-forming). The Extracellular segment spans residues 262–265 (VNTK). The chain crosses the membrane as a helical span at residues 266-286 (EMIFDIFYMLFNLGLTAYLIG). The Cytoplasmic segment spans residues 287-857 (NMTNLVVHGT…GDHLIFATDS (571 aa)). A nucleoside 3',5'-cyclic phosphate is bound at residue 372–493 (LFRGVSNDLL…IMNNLLQHLK (122 aa)). 6 ANK repeats span residues 515–546 (KMDL…DPNE), 550–579 (NGRT…DPNC), 583–612 (EGSV…TIDA), 614–643 (DVGH…DVTR), 647–676 (TGTS…DVNK), and 680–709 (HGWT…ERRV). A KHA domain is found at 790-857 (RVTISCAEKD…GDHLIFATDS (68 aa)).

It belongs to the potassium channel family. Plant (TC 1.A.1.4) subfamily. In terms of assembly, the potassium channel is probably composed of a homo- or heterotetrameric complex of pore-forming subunits. Possible heteromultimer with AKT2 or KAT3. Part of a K(+)-channel calcium-sensing kinase/phosphatase complex composed by a calcium sensor CBL (CBL1, CBL2, CBL3 or CBL9), a kinase CIPK (CIPK6, CIPK16 or CIPK23), a phosphatase PP2C (AIP1) and a K(+)-channel (AKT1). Interacts directly with AIP1, CBL10, CIPK6, CIPK16 and CIPK23. In terms of processing, phosphorylated by CIPK proteins CIPK6, CIPK16 and CIPK23. The activation by phosphorylation is induced by low K(+) conditions and stimulates K(+) uptake and relocation. Dephosphorylation by AIP1 repressed the transport activity. As to expression, preferentially expressed in the peripheral cell layers of root mature including root cortex and root hairs. Detected also, at a lower level, in the mesophyll of the leaves and at restricted sites corresponding to hydathodes and guard cells.

The protein resides in the cell membrane. Functionally, highly selective inward-rectifying potassium channel that mediate potassium uptake by plant roots in response to low K(+) conditions, by a calcium-, CBL-, and CIPK-dependent pathway. Positively regulated by phosphorylation by CIPK23. Negatively regulated by a kinase-independent regulatory mechanism involving a competing direct binding of CBL10. Involved in the stomatal regulation by monitoring the turgor pressure in guard cells. Assuming opened or closed conformations in response to the voltage difference across the membrane, the channel is activated by hyperpolarization. May interact with the cytoskeleton or with regulatory proteins. Is essential with POT5/HAK5 for high-affinity potassium uptake in roots during seedling establishment and postgermination growth under low potassium conditions. The sequence is that of Potassium channel AKT1 (AKT1) from Arabidopsis thaliana (Mouse-ear cress).